The following is a 65-amino-acid chain: MPKIKTRRCAAKRFSVTGSGKFKRRRKNMRHILTKKASKRKMQLGQPALVDKTNEKAVKRMLPYA.

Belongs to the bacterial ribosomal protein bL35 family.

The polypeptide is Large ribosomal subunit protein bL35 (Oleidesulfovibrio alaskensis (strain ATCC BAA-1058 / DSM 17464 / G20) (Desulfovibrio alaskensis)).